Here is a 1003-residue protein sequence, read N- to C-terminus: Glycine--tRNA ligase (1003 aa).

The glycine--tRNA ligase alpha subunit stretch occupies residues 1–310; that stretch reads MSSQPLTLQT…VTPKKIPTIC (310 aa). A glycine--tRNA ligase beta subunit region spans residues 311-1003; that stretch reads QPEDFLLEIG…CFGFYAWGVL (693 aa).

It belongs to the class-II aminoacyl-tRNA synthetase family.

The protein localises to the cytoplasm. The enzyme catalyses tRNA(Gly) + glycine + ATP = glycyl-tRNA(Gly) + AMP + diphosphate. This chain is Glycine--tRNA ligase (glyQS), found in Chlamydia trachomatis serovar D (strain ATCC VR-885 / DSM 19411 / UW-3/Cx).